The following is a 206-amino-acid chain: Outer-membrane lipoprotein carrier protein (206 aa).

Residues 1-21 form the signal peptide; it reads MTRLLFVLVLSVCLLPVPVKA.

Belongs to the LolA family. Monomer.

It localises to the periplasm. Participates in the translocation of lipoproteins from the inner membrane to the outer membrane. Only forms a complex with a lipoprotein if the residue after the N-terminal Cys is not an aspartate (The Asp acts as a targeting signal to indicate that the lipoprotein should stay in the inner membrane). The sequence is that of Outer-membrane lipoprotein carrier protein from Nitrosomonas europaea (strain ATCC 19718 / CIP 103999 / KCTC 2705 / NBRC 14298).